The sequence spans 204 residues: Kunitz type trypsin inhibitor 106 (204 aa).

Positions 1–26 (MSMRLSIRTLIILAHVCLFITTTTIA) are cleaved as a signal peptide. The N-linked (GlcNAc...) asparagine glycan is linked to asparagine 62. A disulfide bridge connects residues cysteine 65 and cysteine 112. Asparagine 141 carries N-linked (GlcNAc...) asparagine glycosylation. Cystine bridges form between cysteine 164-cysteine 176 and cysteine 169-cysteine 172.

This sequence belongs to the protease inhibitor I3 (leguminous Kunitz-type inhibitor) family. In terms of assembly, interacts with SCP1 and CP. Expressed at low levels in non-mycorrhizal roots.

It localises to the secreted. Its subcellular location is the extracellular space. The protein localises to the apoplast. Its function is as follows. Protease inhibitor that, together with SCP1, controls mycorrhiza establishment and arbuscule development during root colonization by arbuscular mycorrhizal (AM) fungi (e.g. Rhizophagus irregularis), probably by degrading SCP1 in the apoplast of the periarbuscular region. In Medicago truncatula (Barrel medic), this protein is Kunitz type trypsin inhibitor 106.